Here is a 127-residue protein sequence, read N- to C-terminus: Large ribosomal subunit protein bL12 (127 aa).

It belongs to the bacterial ribosomal protein bL12 family. Homodimer. Part of the ribosomal stalk of the 50S ribosomal subunit. Forms a multimeric L10(L12)X complex, where L10 forms an elongated spine to which 2 to 4 L12 dimers bind in a sequential fashion. Binds GTP-bound translation factors.

Functionally, forms part of the ribosomal stalk which helps the ribosome interact with GTP-bound translation factors. Is thus essential for accurate translation. This Pelobacter propionicus (strain DSM 2379 / NBRC 103807 / OttBd1) protein is Large ribosomal subunit protein bL12.